The following is a 220-amino-acid chain: 7-cyano-7-deazaguanine synthase (220 aa).

Residue 10 to 20 (FSGGQDSTTCL) coordinates ATP. Cys188, Cys197, Cys200, and Cys203 together coordinate Zn(2+).

Belongs to the QueC family. It depends on Zn(2+) as a cofactor.

The enzyme catalyses 7-carboxy-7-deazaguanine + NH4(+) + ATP = 7-cyano-7-deazaguanine + ADP + phosphate + H2O + H(+). The protein operates within purine metabolism; 7-cyano-7-deazaguanine biosynthesis. In terms of biological role, catalyzes the ATP-dependent conversion of 7-carboxy-7-deazaguanine (CDG) to 7-cyano-7-deazaguanine (preQ(0)). The chain is 7-cyano-7-deazaguanine synthase from Neisseria meningitidis serogroup C (strain 053442).